Here is a 278-residue protein sequence, read N- to C-terminus: Trehalose/maltose transport system permease protein MalG (278 aa).

The next 6 membrane-spanning stretches (helical) occupy residues 12-32, 74-94, 106-126, 141-161, 186-206, and 242-262; these read IIGAILMAIICLFPFIWMIVV, IIIASLVTLTTVSISSLAAYA, IPIFVLGLSMFPQISLVGYLF, LYFPYVAWTLPLSLWILLSYF, IILPLSAPALFSTALLVFIAA, and GSVMAASVISTIPLVIMALLF. The region spanning 70 to 262 is the ABC transmembrane type-1 domain; it reads LKNSIIIASL…IPLVIMALLF (193 aa).

This sequence belongs to the binding-protein-dependent transport system permease family. The complex is composed of two ATP-binding proteins (MalK), two transmembrane proteins (MalG and MalF) and a solute-binding protein (MalE).

It localises to the cell membrane. Its function is as follows. Part of the ABC transporter complex MalEFGK involved in trehalose/maltose import. Responsible for the translocation of the substrate across the membrane. In Thermococcus litoralis (strain ATCC 51850 / DSM 5473 / JCM 8560 / NS-C), this protein is Trehalose/maltose transport system permease protein MalG (malG).